The chain runs to 435 residues: Serine--tRNA ligase (435 aa).

233–235 (TAE) is an L-serine binding site. 264 to 266 (RAE) is an ATP binding site. Position 287 (Glu287) interacts with L-serine. 351-354 (EISS) contacts ATP. An L-serine-binding site is contributed by Ser386.

It belongs to the class-II aminoacyl-tRNA synthetase family. Type-1 seryl-tRNA synthetase subfamily. Homodimer. The tRNA molecule binds across the dimer.

The protein resides in the cytoplasm. It catalyses the reaction tRNA(Ser) + L-serine + ATP = L-seryl-tRNA(Ser) + AMP + diphosphate + H(+). The catalysed reaction is tRNA(Sec) + L-serine + ATP = L-seryl-tRNA(Sec) + AMP + diphosphate + H(+). It functions in the pathway aminoacyl-tRNA biosynthesis; selenocysteinyl-tRNA(Sec) biosynthesis; L-seryl-tRNA(Sec) from L-serine and tRNA(Sec): step 1/1. Catalyzes the attachment of serine to tRNA(Ser). Is also able to aminoacylate tRNA(Sec) with serine, to form the misacylated tRNA L-seryl-tRNA(Sec), which will be further converted into selenocysteinyl-tRNA(Sec). The sequence is that of Serine--tRNA ligase from Anaeromyxobacter dehalogenans (strain 2CP-C).